A 593-amino-acid chain; its full sequence is tRNA (guanine(26)-N(2))-dimethyltransferase 1 (593 aa).

In terms of domain architecture, Trm1 methyltransferase spans 9–465 (TVIKEGEAEV…APMEIIWDIM (457 aa)). Arginine 36 serves as a coordination point for S-adenosyl-L-methionine. Positions 56-118 (AMLSKRARSS…KTAYESARRE (63 aa)) are disordered. Basic and acidic residues-rich tracts occupy residues 68 to 81 (VVEKDVSETSKEET) and 88 to 118 (DNGKTNGEHEVTTQDGPKEAAKTAYESARRE). The S-adenosyl-L-methionine site is built by arginine 134, aspartate 152, and valine 185. Residues cysteine 315, cysteine 318, cysteine 350, and cysteine 353 each contribute to the Zn(2+) site. The disordered stretch occupies residues 546-593 (VNGHLNNNHKEAGDEEEEEEEEEPEEDIIEGEPELKRQKTTEDFASTS). Residues 558 to 577 (GDEEEEEEEEEPEEDIIEGE) are compositionally biased toward acidic residues. Residues 578–587 (PELKRQKTTE) are compositionally biased toward basic and acidic residues.

This sequence belongs to the class I-like SAM-binding methyltransferase superfamily. Trm1 family.

The catalysed reaction is guanosine(26) in tRNA + 2 S-adenosyl-L-methionine = N(2)-dimethylguanosine(26) in tRNA + 2 S-adenosyl-L-homocysteine + 2 H(+). Its function is as follows. Dimethylates a single guanine residue at position 26 of most tRNAs using S-adenosyl-L-methionine as donor of the methyl groups. The protein is tRNA (guanine(26)-N(2))-dimethyltransferase 1 of Arabidopsis thaliana (Mouse-ear cress).